A 336-amino-acid polypeptide reads, in one-letter code: Ferrochelatase (336 aa).

Fe cation-binding residues include His206 and Glu287.

The protein belongs to the ferrochelatase family.

It is found in the cytoplasm. The catalysed reaction is heme b + 2 H(+) = protoporphyrin IX + Fe(2+). The protein operates within porphyrin-containing compound metabolism; protoheme biosynthesis; protoheme from protoporphyrin-IX: step 1/1. In terms of biological role, catalyzes the ferrous insertion into protoporphyrin IX. The chain is Ferrochelatase from Neisseria meningitidis serogroup A / serotype 4A (strain DSM 15465 / Z2491).